Here is a 143-residue protein sequence, read N- to C-terminus: UPF0201 protein Pisl_1658 (143 aa).

This sequence belongs to the UPF0201 family.

The chain is UPF0201 protein Pisl_1658 from Pyrobaculum islandicum (strain DSM 4184 / JCM 9189 / GEO3).